The sequence spans 224 residues: UPF0758 protein PM1152 (224 aa).

Residues 102–224 enclose the MPN domain; sequence AFKNSENVRF…YYSFAENRLL (123 aa). 3 residues coordinate Zn(2+): histidine 173, histidine 175, and aspartate 186. The short motif at 173-186 is the JAMM motif element; it reads HNHPSGNPEPSASD.

Belongs to the UPF0758 family.

The polypeptide is UPF0758 protein PM1152 (Pasteurella multocida (strain Pm70)).